A 361-amino-acid polypeptide reads, in one-letter code: DNA replication and repair protein RecF (361 aa).

30–37 (GPNGSGKT) serves as a coordination point for ATP.

Belongs to the RecF family.

The protein resides in the cytoplasm. The RecF protein is involved in DNA metabolism; it is required for DNA replication and normal SOS inducibility. RecF binds preferentially to single-stranded, linear DNA. It also seems to bind ATP. In Yersinia enterocolitica serotype O:8 / biotype 1B (strain NCTC 13174 / 8081), this protein is DNA replication and repair protein RecF.